The sequence spans 525 residues: MGDPSKQDILAIFKRLRSVPTNKVCFDCGAKNPSWASISYGVFLCIDCSGSHRSLGVHLSFIRSTELDSNWSWFQLRCMQVGGNANASSFFHQHGCATKDTNAKYNSRAAQLYREKIKTLATQATRRHGTDLWLDSCAAPPASPPPKEEDFFASHASLEVSGATQASAQPEPASSTPWGLETTPEKHEGGPGQGPSVEGLNTPGKTAPAEVSSIIKKKPNQAKKGLGAKKGSLGAQKLTNTSFTEIEKQAQAVDKRKEQEDLARGTPKEESIVSSLRLAYKDLEIHKKQDERLNLSGQKKAEAERLGMGFGSCRGGISHSVTSDMQTIEQESPTLAKPRRKYQEDPEDSYFSSSSKWSEQSSSRYFDDPMELRSSHFSSWDDSADSYWKKDSSRDPEPATKSTGSSDRPSSRRKPEYEPVGNTDEAQKKFGNVKAISSDMYFGIQSQTDFETRARLERLSTSSSISSADLFDEQRKQTTGNYNLSNVLPNAPDMAQFKQGVRSVAGKLSVFANGVMTSIQDRYGS.

The Arf-GAP domain maps to 10–126 (LAIFKRLRSV…IKTLATQATR (117 aa)). The segment at 25–48 (CFDCGAKNPSWASISYGVFLCIDC) adopts a C4-type zinc-finger fold. The disordered stretch occupies residues 160 to 233 (VSGATQASAQ…KGLGAKKGSL (74 aa)). Polar residues predominate over residues 162 to 177 (GATQASAQPEPASSTP). Over residues 222–233 (AKKGLGAKKGSL) the composition is skewed to low complexity. A phosphoserine mark is found at S232, S242, S271, and S275. Residues 249 to 271 (QAQAVDKRKEQEDLARGTPKEES) form a disordered region. Residues 293–305 (LNLSGQKKAEAER) are compositionally biased toward basic and acidic residues. Disordered stretches follow at residues 293–364 (LNLS…SSSR) and 377–428 (FSSW…EAQK). A compositionally biased stretch (polar residues) spans 319-333 (HSVTSDMQTIEQESP). Residue S332 is modified to Phosphoserine. A compositionally biased stretch (low complexity) spans 349 to 363 (SYFSSSSKWSEQSSS). S379 carries the post-translational modification Phosphoserine. Positions 387 to 398 (YWKKDSSRDPEP) are enriched in basic and acidic residues. Residues S437, S460, S462, S464, S466, and S467 each carry the phosphoserine modification.

The protein localises to the cytoplasm. It localises to the golgi apparatus membrane. Its activity is regulated as follows. GAP activity stimulated by phosphatidylinositol 4,5-bisphosphate (PIP2). In terms of biological role, GTPase-activating protein (GAP) for ADP ribosylation factor 1 (ARF1). Hydrolysis of ARF1-bound GTP may lead to dissociation of coatomer from Golgi-derived membranes to allow fusion with target membranes. The chain is ADP-ribosylation factor GTPase-activating protein 3 from Rattus norvegicus (Rat).